The sequence spans 217 residues: Probable D-methionine transport system permease protein MetI (217 aa).

In terms of domain architecture, ABC transmembrane type-1 spans 13 to 207 (TLETLYMGFI…LIVMLSQKLG (195 aa)). A run of 5 helical transmembrane segments spans residues 20 to 40 (GFIATLFAIVIGLPIGLLAFL), 58 to 78 (VIINIGRSVPFIILLIILLPF), 81 to 101 (LVVGTTLGTTAAIVPLSVSAI), 143 to 163 (IPILINGITLTLVALIGYSAM), and 184 to 204 (NMIYVKWIATIIIVLIVMLSQ).

The protein belongs to the binding-protein-dependent transport system permease family. CysTW subfamily.

Its subcellular location is the cell inner membrane. Its function is as follows. Part of the binding-protein-dependent transport system for D-methionine. Probably responsible for the translocation of the substrate across the membrane. The chain is Probable D-methionine transport system permease protein MetI (metI) from Pasteurella multocida (strain Pm70).